A 237-amino-acid polypeptide reads, in one-letter code: Small ribosomal subunit protein uS2 (237 aa).

It belongs to the universal ribosomal protein uS2 family.

The protein is Small ribosomal subunit protein uS2 of Clostridioides difficile (strain 630) (Peptoclostridium difficile).